A 220-amino-acid polypeptide reads, in one-letter code: Large ribosomal subunit protein uL3 (220 aa).

A disordered region spans residues 137–159; that stretch reads GASHGAHKNHRKPGSIGGASTPS.

This sequence belongs to the universal ribosomal protein uL3 family. As to quaternary structure, part of the 50S ribosomal subunit. Forms a cluster with proteins L14 and L19.

In terms of biological role, one of the primary rRNA binding proteins, it binds directly near the 3'-end of the 23S rRNA, where it nucleates assembly of the 50S subunit. This is Large ribosomal subunit protein uL3 from Renibacterium salmoninarum (strain ATCC 33209 / DSM 20767 / JCM 11484 / NBRC 15589 / NCIMB 2235).